The following is a 654-amino-acid chain: Protein fem-1 homolog A-A (654 aa).

ANK repeat units lie at residues 2 to 31 (DLHT…REEL), 40 to 70 (GGGT…SVEA), 82 to 111 (EGAP…SVNR), 115 to 145 (TNST…DLEV), 149 to 178 (HGHT…QVNR), 182 to 211 (KGNT…RMER), and 214 to 243 (YGMT…GHEQ). Position 108 is a phosphoserine (Ser-108). The segment at 242–265 (EQLSGTELPGEGSSQVAGNHCSTP) is disordered. Residues 253 to 263 (GSSQVAGNHCS) show a composition bias toward polar residues. 2 TPR repeats span residues 283–317 (VEAL…RHQG) and 375–408 (SYYI…QQNN). ANK repeat units follow at residues 519-561 (NGFT…DPDS) and 565-594 (DNNT…HMDA). Ser-608 carries the post-translational modification Phosphoserine.

It belongs to the fem-1 family. In terms of assembly, component of a CRL2 E3 ubiquitin-protein ligase complex, also named ECS (Elongin BC-CUL2/5-SOCS-box protein) complex, composed of CUL2, Elongin BC (ELOB and ELOC), RBX1 and substrate-specific adapter FEM1A. Interacts with PTGER4. Interacts with NFKB1; the interaction is direct. In terms of processing, phosphorylated; highly phosphorylated in myoblasts and myotubes. Phosphorylation at Ser-108 and Ser-608 promote PGE2-EP4-mediated inhibition of inflammation. Dephosphorylated by protein phosphatase 2A (PP2A). In terms of tissue distribution, preferentially expressed in cardiac muscle, brain and liver (at protein level). Also expressed in skeletal muscle.

It localises to the mitochondrion. It is found in the cytoplasm. Its pathway is protein modification; protein ubiquitination. Its function is as follows. Substrate-recognition component of a Cul2-RING (CRL2) E3 ubiquitin-protein ligase complex of the DesCEND (destruction via C-end degrons) pathway, which recognizes a C-degron located at the extreme C terminus of target proteins, leading to their ubiquitination and degradation. The C-degron recognized by the DesCEND pathway is usually a motif of less than ten residues and can be present in full-length proteins, truncated proteins or proteolytically cleaved forms. The CRL2(FEM1A) complex specifically recognizes proteins with an arginine at the C-terminus: recognizes and binds proteins ending with -Lys/Arg-Xaa-Arg and -Lys/Arg-Xaa-Xaa-Arg C-degrons, such as SIL1 or OR51B2, leading to their ubiquitination and degradation. Involved in PGE2-EP4-mediated inhibition of inflammation of macrophages via interaction with NFKB1 and PTGER4. Promotes inflammation in brain microglia through MAP2K4/MKK4-mediated signaling. This is Protein fem-1 homolog A-A from Mus musculus (Mouse).